The following is a 364-amino-acid chain: Growth hormone secretagogue receptor type 1 (364 aa).

The Extracellular segment spans residues 1–40; that stretch reads MWNATPSEEPEPNVTLDLDWDASPGNDSLPDELLPLFPAP. N-linked (GlcNAc...) asparagine glycosylation is found at Asn-13 and Asn-26. The chain crosses the membrane as a helical span at residues 41-66; it reads LLAGVTATCVALFVVGISGNLLTMLV. Residues 67–72 lie on the Cytoplasmic side of the membrane; it reads VSRFRE. A helical membrane pass occupies residues 73–96; the sequence is LRTTTNLYLSSMAFSDLLIFLCMP. The Extracellular segment spans residues 97 to 117; sequence LDLVRLWQYRPWNFGDLLCKL. Cys-115 and Cys-197 are disulfide-bonded. Residues 118–139 form a helical membrane-spanning segment; it reads FQFVSESCTYATVLTITALSVE. At 140 to 162 the chain is on the cytoplasmic side; it reads RYFAICFPLRAKVVVTKGRVKLV. A helical membrane pass occupies residues 163-183; it reads ILVIWAVAFCSAGPIFVLVGV. At 184–211 the chain is on the extracellular side; the sequence is EHENGTDPRDTNECRATEFAVRSGLLTV. Asn-187 carries an N-linked (GlcNAc...) asparagine glycan. A helical transmembrane segment spans residues 212–235; sequence MVWVSSVFFFLPVFCLTVLYSLIG. The Cytoplasmic segment spans residues 236–263; that stretch reads RKLWRRRGDAAVGASLRDQNHKQTVKML. Residues 264–285 traverse the membrane as a helical segment; sequence AVVVFAFILCWLPFHVGRYLFS. The Extracellular segment spans residues 286–302; sequence KSFEPGSLEIAQISQYC. A helical transmembrane segment spans residues 303–326; it reads NLVSFVLFYLSAAINPILYNIMSK. Residues 327-364 lie on the Cytoplasmic side of the membrane; that stretch reads KYRVAVFKLLGFESFSQRKLSTLKDESSRAWTKSSINT.

The protein belongs to the G-protein coupled receptor 1 family.

The protein resides in the cell membrane. Its function is as follows. Receptor for ghrelin, coupled to G-alpha-11 proteins. Stimulates growth hormone secretion. Also binds other growth hormone releasing peptides (GHRP) (e.g. Met-enkephalin and GHRP-6) as well as non-peptide, low molecular weight secretagogues (e.g. L-692,429, MK-0677, adenosine). This chain is Growth hormone secretagogue receptor type 1 (Ghsr), found in Rattus norvegicus (Rat).